A 62-amino-acid chain; its full sequence is Large ribosomal subunit protein bL28 (62 aa).

It belongs to the bacterial ribosomal protein bL28 family.

This Helicobacter pylori (strain Shi470) protein is Large ribosomal subunit protein bL28.